A 307-amino-acid chain; its full sequence is Acetyl-coenzyme A carboxylase carboxyl transferase subunit beta (307 aa).

The 270-residue stretch at 25–294 (VWTKCTSCEQ…PLVVPIEQPK (270 aa)) folds into the CoA carboxyltransferase N-terminal domain. Cys29, Cys32, Cys48, and Cys51 together coordinate Zn(2+). A C4-type zinc finger spans residues 29–51 (CTSCEQVLYHADLERNLEVCPKC).

The protein belongs to the AccD/PCCB family. As to quaternary structure, acetyl-CoA carboxylase is a heterohexamer composed of biotin carboxyl carrier protein (AccB), biotin carboxylase (AccC) and two subunits each of ACCase subunit alpha (AccA) and ACCase subunit beta (AccD). The cofactor is Zn(2+).

The protein localises to the cytoplasm. The enzyme catalyses N(6)-carboxybiotinyl-L-lysyl-[protein] + acetyl-CoA = N(6)-biotinyl-L-lysyl-[protein] + malonyl-CoA. The protein operates within lipid metabolism; malonyl-CoA biosynthesis; malonyl-CoA from acetyl-CoA: step 1/1. Functionally, component of the acetyl coenzyme A carboxylase (ACC) complex. Biotin carboxylase (BC) catalyzes the carboxylation of biotin on its carrier protein (BCCP) and then the CO(2) group is transferred by the transcarboxylase to acetyl-CoA to form malonyl-CoA. In Photobacterium profundum (strain SS9), this protein is Acetyl-coenzyme A carboxylase carboxyl transferase subunit beta.